The following is a 378-amino-acid chain: Alcohol dehydrogenase (378 aa).

Fe cation contacts are provided by Asp-195, His-199, His-262, and His-274.

The protein belongs to the iron-containing alcohol dehydrogenase family. Fe(2+) is required as a cofactor. Mn(2+) serves as cofactor.

The catalysed reaction is a primary alcohol + NAD(+) = an aldehyde + NADH + H(+). It catalyses the reaction butan-1-ol + NAD(+) = butanal + NADH + H(+). The enzyme catalyses hexan-1-ol + NAD(+) = hexanal + NADH + H(+). It carries out the reaction ethanol + NAD(+) = acetaldehyde + NADH + H(+). Its function is as follows. Thermostable type III alcohol dehydrogenase. For oxidation activity, the best substrates are 1-butanol and 1-hexanol, followed by ethanol. Shows lower activity with ethylene glycol, isopentanol, isopropanol and glycerol. Displays higher reduction activity in the presence of butanal, followed by acetaldehyde. Has lower activity with hexanal and acetone. The sequence is that of Alcohol dehydrogenase from Thermococcus barophilus.